The chain runs to 230 residues: 2,3-bisphosphoglycerate-dependent phosphoglycerate mutase (230 aa).

Substrate is bound by residues 8-15 (RHGESEWN), 21-22 (TG), Arg60, 87-90 (ERHY), Lys98, 114-115 (RR), and 183-184 (GN). Catalysis depends on His9, which acts as the Tele-phosphohistidine intermediate. Glu87 serves as the catalytic Proton donor/acceptor.

It belongs to the phosphoglycerate mutase family. BPG-dependent PGAM subfamily.

It carries out the reaction (2R)-2-phosphoglycerate = (2R)-3-phosphoglycerate. The protein operates within carbohydrate degradation; glycolysis; pyruvate from D-glyceraldehyde 3-phosphate: step 3/5. Functionally, catalyzes the interconversion of 2-phosphoglycerate and 3-phosphoglycerate. The chain is 2,3-bisphosphoglycerate-dependent phosphoglycerate mutase from Streptococcus agalactiae serotype Ia (strain ATCC 27591 / A909 / CDC SS700).